A 305-amino-acid chain; its full sequence is Protein ORANGE, chloroplastic (305 aa).

The transit peptide at M1–S54 directs the protein to the chloroplast. 2 helical membrane passes run V144–A164 and I197–V217. The CR-type-like stretch occupies residues V206–H297. One copy of the CXXCXGXG motif repeat lies at C228–G235. The stretch at C239–G246 is one CXXCXXXG motif repeat. A CXXCXGXG motif repeat occupies C272–G279. Residues C283–G290 form a CXXCXXXG motif repeat.

The protein belongs to the orange-like family. In terms of assembly, interacts with ERF1-2. As to expression, expressed in young leaves, curds and flower buds.

Its subcellular location is the plastid. The protein resides in the chloroplast membrane. It localises to the nucleus. In terms of biological role, involved in chromoplast differentiation. Is associated with a cellular process that triggers the differentiation of pro-plastids or other non-colored plastids into chromoplasts for carotenoid accumulation. Associated with carotenoid accumulation in de-etiolated cotyledons. Controls leaf petiole elongation by suppressing the expression of ERF1 genes. This Brassica oleracea var. botrytis (Cauliflower) protein is Protein ORANGE, chloroplastic.